Here is a 1468-residue protein sequence, read N- to C-terminus: MSSAGVVEMQKAASFRREGGGSMASMWLSADGNGAFSRSSSSSSRRMRGEEDDEEALRWAALQKLPTYDRVRAAILPMVEGEGGEAGGGGGGRRVVVDVHSLGPHERRALLERLVRVADDDNERFLLKLKERISRVGIDMPTIEVRFEHLEVEAEVRVGNSGIPTVLNSITNKIEEAANALGILPTRKQTLRILHDISGIIKPKRMTLLLGPPGSGKTTFLLALAGRLKDLKFSGQVTYNGHQMEDFVPQRTAAYISQHDLHIGEMTVRETLSFSARCQGVGSRFDMLTELTRREKAANIKPDADVDAFMKASAMEGQESNLITDYILKILGLEICADTMVGDDMVRGISGGQRKRVTTGEMLVGPANAFFMDEISTGLDSSTTFQIVKSLRQTIHILGGTAVISLLQPAPETYDLFDDIILLSDGHIVYQGPRENVLEFFELMGFKCPERKGVADFLQEVTSRKDQKQYWAQHDKPYRYVPIKEFASAFQSFHTGRSIANELATPFDKSKSHPAALTTSRYGVSAMELLKANIDRELLLIKRNSFVYIFRTIQLMTVSAMAMTVFFRTKMHRDSVADGVIFMGALFFAVMMIMLNGLSELPLTIFKLPVFFKQRDLLFFPAWTYTIPSWILKSPMSFIEVGGFCFMSYYVIGFDPNVGRFFKQYLLMLAVSQMAAALFRFVGGAARNLIVANVFGSFMLLIFMVLGGFILARDKVNKWWIWGYWISPMMYAQNAVSVNEFLGHSWDKVLNNSLSNETLGVQALMSRGIFPEAKWYWIGFGALLGFIMLFNILFTLALTYLKPDGKSQPSISEEELKEKQANINGNVLDVDTMASSNNLAIVGSTGTGSEIADNSQPTQRGMVLPFTPLSLTFEDIKYSVDMPQEMKAHGIVEDRLELLKGVSGCFRPGVLTALMGVSGAGKTTLMDVLAGRKTGGYIEGNISISGYPKKQETFARVSGYCEQNDIHSPQVTVSESLLFSAWLRLPKDVDSNTRKMFIEEVMELVELKPLRDALVGLPGVNGLSIEQRKRLTIAVELVANPSIIFMDEPTSGLDARAAAIVMRTVRNTVNTGRTVVCTIHQPSIDIFEAFDELFLMKRGGEEIYVGPLGHHSSELIKYFEGIQGVSKITDGYNPATWMLEVTTVSQEQALDVDFCDIYRKSELFQRNKALIQELSTPPPGSSELYFPTQYSQSFLIQCLACLWKQHLSYWRNPPYNAIRLFFTTVIALIFGTIFWDLGGKMGQSQDLFNAMGSMYAAVLFIGVLNGQSVQPVVSVERTVFYRERAAGMYSALPYAFGQVAIEFPYTLVQSVIYSIIVYSMIGFQWTVAKFFWYLFFMFFTLLYFTFYGMMAVGLTPSYHVASIVSSAFYAIWNLFTGFVISRPATPVWWRWYCWICPVAWTLYGLIVSQYGDIVTPMDDGIPVNVFVENYFDFKHSWLGFVAVVIVAFTMLFAFLFGFAIMKLNFQKR.

The segment at 33–53 is disordered; sequence NGAFSRSSSSSSRRMRGEEDD. Positions 178–450 constitute an ABC transporter 1 domain; the sequence is ANALGILPTR…FELMGFKCPE (273 aa). 211-218 contributes to the ATP binding site; sequence GPPGSGKT. One can recognise an ABC transmembrane type-2 1 domain in the interval 528–741; sequence ELLKANIDRE…AQNAVSVNEF (214 aa). A run of 6 helical transmembrane segments spans residues 546 to 566, 575 to 595, 634 to 654, 666 to 686, 690 to 710, and 778 to 798; these read FVYI…MTVF, SVAD…MIML, SPMS…VIGF, LLML…GGAA, IVAN…GGFI, and IGFG…TLAL. The 253-residue stretch at 871–1123 folds into the ABC transporter 2 domain; it reads LTFEDIKYSV…ELIKYFEGIQ (253 aa). ATP is bound at residue 916 to 923; the sequence is GVSGAGKT. Positions 1196-1410 constitute an ABC transmembrane type-2 2 domain; sequence IQCLACLWKQ…TLYGLIVSQY (215 aa). 7 helical membrane passes run 1217-1237, 1247-1267, 1303-1323, 1330-1350, 1360-1380, 1387-1407, and 1440-1460; these read AIRL…FWDL, LFNA…LNGQ, FPYT…MIGF, FFWY…YGMM, VASI…GFVI, VWWR…GLIV, and FVAV…GFAI.

Belongs to the ABC transporter superfamily. ABCG family. PDR (TC 3.A.1.205) subfamily.

The protein resides in the membrane. In terms of biological role, may be a general defense protein. The sequence is that of ABC transporter G family member 34 from Oryza sativa subsp. japonica (Rice).